A 590-amino-acid polypeptide reads, in one-letter code: Leucine-rich repeat transmembrane neuronal protein 4 (590 aa).

The signal sequence occupies residues 1–30; it reads MGFRLITQLKGMSVFLVLFPTLLLVMLTGA. The region spanning 31–61 is the LRRNT domain; that stretch reads QRACPKNCRCDGKIVYCESHAFADIPENISG. Residues 31–424 are Extracellular-facing; sequence QRACPKNCRC…HEYEHVSFHK (394 aa). N-linked (GlcNAc...) asparagine glycosylation is present at Asn-58. LRR repeat units lie at residues 62 to 83, 86 to 107, 110 to 131, 134 to 155, 158 to 179, 182 to 203, 206 to 226, 230 to 251, 254 to 275, and 278 to 299; these read GSQG…QFAG, QLIW…AFQG, RLKE…TFHP, NLRN…QFKG, KLII…VFQD, NLDF…AFAG, KLKE…AHFP, NLRS…LTWT, SLHT…TFKC, and NLQK…TVNA. N-linked (GlcNAc...) asparagine glycosylation occurs at Asn-126. N-linked (GlcNAc...) asparagine glycosylation is present at Asn-291. The 52-residue stretch at 311–362 folds into the LRRCT domain; it reads NMWECSRSICPLFYWLKNFKGNKESTMICAGPKHIQGEKVSDAVETYNICSD. Residues 425–445 traverse the membrane as a helical segment; that stretch reads IIAGSVALFLSVAMILLVIYV. Residues 446–590 are Cytoplasmic-facing; sequence SWKRYPASMK…PAIYLERITN (145 aa).

It belongs to the LRRTM family. As to quaternary structure, peripherally associated with AMPAR complex. AMPAR complex consists of an inner core made of 4 pore-forming GluA/GRIA proteins (GRIA1, GRIA2, GRIA3 and GRIA4) and 4 major auxiliary subunits arranged in a twofold symmetry. One of the two pairs of distinct binding sites is occupied either by CNIH2, CNIH3 or CACNG2, CACNG3. The other harbors CACNG2, CACNG3, CACNG4, CACNG8 or GSG1L. This inner core of AMPAR complex is complemented by outer core constituents binding directly to the GluA/GRIA proteins at sites distinct from the interaction sites of the inner core constituents. Outer core constituents include at least PRRT1, PRRT2, CKAMP44/SHISA9, FRRS1L and NRN1. The proteins of the inner and outer core serve as a platform for other, more peripherally associated AMPAR constituents, including LRRTM4. Alone or in combination, these auxiliary subunits control the gating and pharmacology of the AMPAR complex and profoundly impact their biogenesis and protein processing. Predominantly in the brain (at protein level). Also expressed in the cerebellum and other tissues.

The protein localises to the cell membrane. The protein resides in the postsynaptic cell membrane. Its function is as follows. May play a role in the development and maintenance of the vertebrate nervous system. Exhibits strong synaptogenic activity, restricted to excitatory presynaptic differentiation. In Mus musculus (Mouse), this protein is Leucine-rich repeat transmembrane neuronal protein 4 (Lrrtm4).